Consider the following 554-residue polypeptide: Intraflagellar transport protein 56 (554 aa).

The disordered stretch occupies residues 1–23; it reads MMLSRAKPAVGNEVQQIDKKKKK. TPR repeat units follow at residues 57 to 90, 92 to 125, 151 to 184, and 468 to 501; these read EDTE…EGCN, DVWV…LQNR, IEDQ…NRDF, and ANDC…EGKR.

It belongs to the IFT56 family. Component of the IFT complex B.

The protein resides in the cell projection. Its subcellular location is the cilium. Its function is as follows. Component of the intraflagellar transport (IFT) complex B required for transport of proteins in the motile cilium. Required for transport of specific ciliary cargo proteins related to motility, while it is neither required for IFT complex B assembly or motion nor for cilium assembly. Plays a key role in maintaining the integrity of the IFT complex B and the proper ciliary localization of the IFT complex B components. Essential for maintaining proper microtubule organization within the ciliary axoneme. This chain is Intraflagellar transport protein 56, found in Xenopus tropicalis (Western clawed frog).